The following is a 901-amino-acid chain: Protein translocase subunit SecA (901 aa).

Residues Q87, 105 to 109 (GEGKT), and D512 each bind ATP. The segment at 859-901 (HQDDDSAAAAALAAQTGERKVGRNDPCPCGSGKKYKQCHGRLQ) is disordered. Zn(2+) contacts are provided by C885, C887, C896, and H897. Residues 891 to 901 (KKYKQCHGRLQ) show a composition bias toward basic residues.

Belongs to the SecA family. In terms of assembly, monomer and homodimer. Part of the essential Sec protein translocation apparatus which comprises SecA, SecYEG and auxiliary proteins SecDF-YajC and YidC. Requires Zn(2+) as cofactor.

It localises to the cell inner membrane. The protein localises to the cytoplasm. The catalysed reaction is ATP + H2O + cellular proteinSide 1 = ADP + phosphate + cellular proteinSide 2.. Its function is as follows. Part of the Sec protein translocase complex. Interacts with the SecYEG preprotein conducting channel. Has a central role in coupling the hydrolysis of ATP to the transfer of proteins into and across the cell membrane, serving both as a receptor for the preprotein-SecB complex and as an ATP-driven molecular motor driving the stepwise translocation of polypeptide chains across the membrane. The sequence is that of Protein translocase subunit SecA from Escherichia coli O9:H4 (strain HS).